Consider the following 368-residue polypeptide: N-acetylneuraminate epimerase (368 aa).

The signal sequence occupies residues 1–19 (MNKTITALAIMMASFAANA). Kelch repeat units lie at residues 40–84 (TVYI…AFID), 86–137 (NLYV…FVHN), 139–173 (KAYV…KINA), 174–219 (HYFD…VNKG), 222–265 (TWLI…VAGG), 287–336 (ENYQ…PWNN), and 338–367 (LLII…VTVQ). Glu228 (proton acceptor) is an active-site residue.

Homodimer.

Its subcellular location is the periplasm. It catalyses the reaction N-acetyl-alpha-neuraminate = N-acetyl-beta-neuraminate. Functionally, converts alpha-N-acetylneuranimic acid (Neu5Ac) to the beta-anomer, accelerating the equilibrium between the alpha- and beta-anomers. Probably facilitates sialidase-negative bacteria to compete successfully for limited amounts of extracellular Neu5Ac, which is likely taken up in the beta-anomer. In addition, the rapid removal of sialic acid from solution might be advantageous to the bacterium to damp down host responses. Forms linear aceneuramate during interconversion of Neu5Ac anomers. The sequence is that of N-acetylneuraminate epimerase (nanM) from Escherichia coli (strain K12).